A 239-amino-acid chain; its full sequence is AA9 family lytic polysaccharide monooxygenase C (239 aa).

His-1 is a binding site for Cu(2+). A disulfide bond links Cys-39 and Cys-190. Asn-75 is a glycosylation site (N-linked (GlcNAc...) asparagine). His-84 provides a ligand contact to Cu(2+). A glycan (N-linked (GlcNAc...) asparagine) is linked at Asn-135. 2 residues coordinate O2: His-157 and Gln-166. Tyr-168 lines the Cu(2+) pocket. N-linked (GlcNAc...) asparagine glycosylation is found at Asn-194 and Asn-229.

This sequence belongs to the polysaccharide monooxygenase AA9 family. Cu(2+) serves as cofactor.

The protein resides in the secreted. It carries out the reaction [(1-&gt;4)-beta-D-glucosyl]n+m + reduced acceptor + O2 = 4-dehydro-beta-D-glucosyl-[(1-&gt;4)-beta-D-glucosyl]n-1 + [(1-&gt;4)-beta-D-glucosyl]m + acceptor + H2O.. Functionally, lytic polysaccharide monooxygenase (LPMO) that depolymerizes crystalline and amorphous polysaccharides via the oxidation of scissile alpha- or beta-(1-4)-glycosidic bonds, yielding C1 or C4 oxidation products. Catalysis by LPMOs requires the reduction of the active-site copper from Cu(II) to Cu(I) by a reducing agent and H(2)O(2) or O(2) as a cosubstrate. This chain is AA9 family lytic polysaccharide monooxygenase C, found in Gloeophyllum trabeum (Brown rot fungus).